The sequence spans 435 residues: Serine--tRNA ligase (435 aa).

233-235 contacts L-serine; it reads TAE. 264–266 contacts ATP; the sequence is RAE. Residue glutamate 287 participates in L-serine binding. 351–354 contacts ATP; the sequence is EISS. L-serine is bound at residue serine 386.

It belongs to the class-II aminoacyl-tRNA synthetase family. Type-1 seryl-tRNA synthetase subfamily. As to quaternary structure, homodimer. The tRNA molecule binds across the dimer.

It is found in the cytoplasm. It carries out the reaction tRNA(Ser) + L-serine + ATP = L-seryl-tRNA(Ser) + AMP + diphosphate + H(+). The enzyme catalyses tRNA(Sec) + L-serine + ATP = L-seryl-tRNA(Sec) + AMP + diphosphate + H(+). It functions in the pathway aminoacyl-tRNA biosynthesis; selenocysteinyl-tRNA(Sec) biosynthesis; L-seryl-tRNA(Sec) from L-serine and tRNA(Sec): step 1/1. In terms of biological role, catalyzes the attachment of serine to tRNA(Ser). Is also able to aminoacylate tRNA(Sec) with serine, to form the misacylated tRNA L-seryl-tRNA(Sec), which will be further converted into selenocysteinyl-tRNA(Sec). The protein is Serine--tRNA ligase of Anaeromyxobacter sp. (strain K).